We begin with the raw amino-acid sequence, 308 residues long: Protoheme IX farnesyltransferase (308 aa).

The next 8 membrane-spanning stretches (helical) occupy residues 20 to 40 (LLAY…VTAI), 50 to 70 (AIHP…ATGA), 102 to 122 (NALA…WCAT), 124 to 144 (LLAG…YTLW), 149 to 169 (TSQN…IGWS), 170 to 190 (AITG…FFWT), 227 to 249 (LIYT…WLYG), and 288 to 308 (YLAV…PTLH).

Belongs to the UbiA prenyltransferase family. Protoheme IX farnesyltransferase subfamily.

The protein resides in the cell membrane. It catalyses the reaction heme b + (2E,6E)-farnesyl diphosphate + H2O = Fe(II)-heme o + diphosphate. The protein operates within porphyrin-containing compound metabolism; heme O biosynthesis; heme O from protoheme: step 1/1. Converts heme B (protoheme IX) to heme O by substitution of the vinyl group on carbon 2 of heme B porphyrin ring with a hydroxyethyl farnesyl side group. This Mycobacterium bovis (strain BCG / Pasteur 1173P2) protein is Protoheme IX farnesyltransferase.